The sequence spans 350 residues: Putative D-xylulose reductase (350 aa).

Positions 43, 68, and 154 each coordinate Zn(2+).

This sequence belongs to the zinc-containing alcohol dehydrogenase family. It depends on Zn(2+) as a cofactor.

It carries out the reaction xylitol + NAD(+) = D-xylulose + NADH + H(+). The polypeptide is Putative D-xylulose reductase (Agrobacterium fabrum (strain C58 / ATCC 33970) (Agrobacterium tumefaciens (strain C58))).